The sequence spans 508 residues: Acyl-CoA-binding domain-containing protein 5 (508 aa).

In terms of domain architecture, ACB spans 44 to 133 (YETRFEAAVK…MKKIIETMPM (90 aa)). An acyl-CoA is bound by residues 55–64 (IQSLPKNGSF), 75–79 (YSFYK), Lys101, and Tyr120. The segment at 175–215 (AKAVNGKAESSDSGAESEEEEAQEELKGAEQSGSDDKKTLK) is disordered. Residues 181-214 (KAESSDSGAESEEEEAQEELKGAEQSGSDDKKTL) adopt a coiled-coil conformation. A phosphoserine mark is found at Ser184, Ser185, Ser187, Ser191, Ser206, and Ser233. Basic and acidic residues predominate over residues 198–215 (EELKGAEQSGSDDKKTLK). Positions 240–260 (SDIHTDSSRSTRSSEDEKPGD) are enriched in basic and acidic residues. Positions 240-300 (SDIHTDSSRS…LTSDSDSEVY (61 aa)) are disordered. A Phosphoserine modification is found at Ser303. 2 disordered regions span residues 318–340 (PTQH…NGSI) and 353–419 (EVKH…RGSR). Basic and acidic residues predominate over residues 353-376 (EVKHGGEDGRSSSGAPHRETRGGE). A Phosphoserine modification is found at Ser405. Over residues 408-418 (DGERWGSDRGS) the composition is skewed to basic and acidic residues. Residues 428 to 453 (LVLIRLQEDMQNVLQRLHKLETLTAS) adopt a coiled-coil conformation. Residue Lys446 is modified to N6-acetyllysine. The chain crosses the membrane as a helical span at residues 480-500 (GALAFAIIWPFIAQWLAHLYY).

Belongs to the ATG37 family.

Its subcellular location is the peroxisome membrane. In terms of biological role, acyl-CoA binding protein which acts as the peroxisome receptor for pexophagy but is dispensable for aggrephagy and nonselective autophagy. Binds medium- and long-chain acyl-CoA esters. This is Acyl-CoA-binding domain-containing protein 5 (Acbd5) from Mus musculus (Mouse).